Here is a 154-residue protein sequence, read N- to C-terminus: Probable chemoreceptor glutamine deamidase CheD (154 aa).

It belongs to the CheD family.

The enzyme catalyses L-glutaminyl-[protein] + H2O = L-glutamyl-[protein] + NH4(+). In terms of biological role, probably deamidates glutamine residues to glutamate on methyl-accepting chemotaxis receptors (MCPs), playing an important role in chemotaxis. In Methanococcus maripaludis (strain C6 / ATCC BAA-1332), this protein is Probable chemoreceptor glutamine deamidase CheD.